The primary structure comprises 372 residues: N-methyl-L-tryptophan oxidase (372 aa).

4-34 (DLIIIGSGSVGAAAGYYATRAGLNVLMTDAH) is a binding site for FAD. Cys308 is modified (S-8alpha-FAD cysteine).

The protein belongs to the MSOX/MTOX family. MTOX subfamily. In terms of assembly, monomer. The cofactor is FAD.

It carries out the reaction N(alpha)-methyl-L-tryptophan + O2 + H2O = L-tryptophan + formaldehyde + H2O2. Catalyzes the oxidative demethylation of N-methyl-L-tryptophan. The polypeptide is N-methyl-L-tryptophan oxidase (Escherichia coli O157:H7).